A 161-amino-acid polypeptide reads, in one-letter code: Allophycocyanin alpha chain (161 aa).

N71 is subject to N4-methylasparagine. Residue C81 participates in (2R,3E)-phycocyanobilin binding.

It belongs to the phycobiliprotein family. In terms of assembly, heterodimer of an alpha and a beta chain. Post-translationally, contains one covalently linked phycocyanobilin chromophore.

Its subcellular location is the cellular thylakoid membrane. Its function is as follows. Light-harvesting photosynthetic bile pigment-protein from the phycobiliprotein complex. Allophycocyanin has a maximum absorption at approximately 650 nanometers. The protein is Allophycocyanin alpha chain (apcA) of Thermosynechococcus vestitus (strain NIES-2133 / IAM M-273 / BP-1).